The following is a 389-amino-acid chain: Liposome tubulation protein MamY (389 aa).

The Cytoplasmic portion of the chain corresponds to 1 to 31 (MAIAAIMGDVLMLMGFNKAAFGKLNSASRAA). A helical transmembrane segment spans residues 32–52 (LIGAVIWAVLSIVYLTIFNGW). Topologically, residues 53–62 (KNLFTMLPHE) are lumenal. Residues 63–83 (FFIVLLSIALPIGLTVLILML) traverse the membrane as a helical segment. At 84 to 389 (SRIVKSVDTL…TETAPDSGMD (306 aa)) the chain is on the cytoplasmic side.

Belongs to the magnetosome MamY family.

The protein localises to the magnetosome membrane. In terms of biological role, causes tubulation when added to magnetosome-derived liposomes, binds liposomes; may be involved in constriction of the cell inner membrane to form mature magnetosomes. Binds preferentially to cardiolipin, a component of bacterial membranes, with very poor to no binding of other tested (phospho)lipids. Addition of cardiolipin to magnetosome-derived lipids increases tubulation. May function with MamX, MamZ amd Mms6. The polypeptide is Liposome tubulation protein MamY (Paramagnetospirillum magneticum (strain ATCC 700264 / AMB-1) (Magnetospirillum magneticum)).